The primary structure comprises 162 residues: NADH-quinone oxidoreductase subunit I (162 aa).

4Fe-4S ferredoxin-type domains are found at residues 54–83 (RRYE…IESE) and 93–122 (TRYD…ETQI). [4Fe-4S] cluster is bound by residues Cys-63, Cys-66, Cys-69, Cys-73, Cys-102, Cys-105, Cys-108, and Cys-112.

It belongs to the complex I 23 kDa subunit family. In terms of assembly, NDH-1 is composed of 14 different subunits. Subunits NuoA, H, J, K, L, M, N constitute the membrane sector of the complex. [4Fe-4S] cluster is required as a cofactor.

It localises to the cell inner membrane. The enzyme catalyses a quinone + NADH + 5 H(+)(in) = a quinol + NAD(+) + 4 H(+)(out). In terms of biological role, NDH-1 shuttles electrons from NADH, via FMN and iron-sulfur (Fe-S) centers, to quinones in the respiratory chain. The immediate electron acceptor for the enzyme in this species is believed to be ubiquinone. Couples the redox reaction to proton translocation (for every two electrons transferred, four hydrogen ions are translocated across the cytoplasmic membrane), and thus conserves the redox energy in a proton gradient. The protein is NADH-quinone oxidoreductase subunit I of Burkholderia mallei (strain NCTC 10247).